A 348-amino-acid polypeptide reads, in one-letter code: Putative agmatine deiminase (348 aa).

Cysteine 335 functions as the Amidino-cysteine intermediate in the catalytic mechanism.

Belongs to the agmatine deiminase family.

It carries out the reaction agmatine + H2O = N-carbamoylputrescine + NH4(+). The sequence is that of Putative agmatine deiminase from Legionella pneumophila subsp. pneumophila (strain Philadelphia 1 / ATCC 33152 / DSM 7513).